The sequence spans 513 residues: Beta-amyrin 24-hydroxylase (513 aa).

The helical; Signal-anchor transmembrane segment at 1–21 threads the bilayer; it reads MLDIKGYLVLFFLWFISTILI. Cys-451 serves as a coordination point for heme.

The protein belongs to the cytochrome P450 family. Heme is required as a cofactor.

It localises to the membrane. The catalysed reaction is beta-amyrin + reduced [NADPH--hemoprotein reductase] + O2 = 24-hydroxy-beta-amyrin + oxidized [NADPH--hemoprotein reductase] + H2O + H(+). The enzyme catalyses sophoradiol + reduced [NADPH--hemoprotein reductase] + O2 = soyasapogenol B + oxidized [NADPH--hemoprotein reductase] + H2O + H(+). Functionally, heme-containing cytochrome P450 involved in the biosynthesis of soyasaponins. Hydroxylates specifically the C-24 methyl group of the triterpenes beta-amyrin and sophoradiol. No activity with lupeol, butyrospermol, tirucalla-7,21-dien-3beta-ol, taraxasterol, psi-taraxasterol, bauerenol, alpha-amyrin and multiflorenol as substrates. This is Beta-amyrin 24-hydroxylase (CYP93E1) from Glycine max (Soybean).